Reading from the N-terminus, the 894-residue chain is Protein NLP9 (894 aa).

The region spanning 517–603 (QEISGARRLE…LDSVQGVEGG (87 aa)) is the RWP-RK domain. The stretch at 578–598 (RKINKVNRSLRKIQTVLDSVQ) forms a coiled coil. The interval 732–763 (NTRIERGNGTVEPNHSISSSMSDSSNSSGAVL) is disordered. The segment covering 747-763 (SISSSMSDSSNSSGAVL) has biased composition (low complexity). Residues 792–875 (TLTVKATYRE…HTVKFLVRDI (84 aa)) form the PB1 domain.

The protein resides in the nucleus. Functionally, probable transcription factor. The polypeptide is Protein NLP9 (NLP9) (Arabidopsis thaliana (Mouse-ear cress)).